A 1011-amino-acid polypeptide reads, in one-letter code: Protein FAM83B (1011 aa).

The interval 1–283 is DUF1669; sequence METSSMLSSL…RTLYARSCVP (283 aa). The required for interaction with RAF1 and for the function stretch occupies residues 1–284; that stretch reads METSSMLSSL…TLYARSCVPS (284 aa). Phosphoserine is present on residues serine 334, serine 422, serine 424, serine 466, and serine 543. The tract at residues 555–585 is disordered; it reads EVNSCTTGSSNSTIIGSQGSETPKEVPDTPT. Positions 557-574 are enriched in low complexity; it reads NSCTTGSSNSTIIGSQGS. Serine 664 carries the post-translational modification Phosphoserine. Disordered regions lie at residues 691 to 738 and 750 to 769; these read NRVR…TKSV and ESNK…SFLK. Residues 694–705 show a composition bias toward basic and acidic residues; it reads RQPEKPKEDLLK. Polar residues-rich tracts occupy residues 706–715 and 727–738; these read SSKSMHNVTH and RNSPSGTTTKSV. Residues 750–762 show a composition bias toward basic and acidic residues; that stretch reads ESNKELASKKEVK. At threonine 782 the chain carries Phosphothreonine. Position 802 is a phosphoserine (serine 802). Residues 807–928 are disordered; sequence LVSEGEENQK…TSSELLRSHS (122 aa). The segment covering 813-828 has biased composition (basic and acidic residues); sequence ENQKPKKSDTKVDSSP. Serine 852, serine 869, and serine 915 each carry phosphoserine. Residues 913-923 show a composition bias toward low complexity; sequence TSSPRPTSSEL.

The protein belongs to the FAM83 family. Interacts with EGFR; positively regulates EGFR inducing its autophosphorylation in absence of stimulation by EGF. Interacts with RAF1; displaces 14-3-3 proteins from RAF1 and activates RAF1 within the RAS/MAPK signaling cascade. Interacts with AKT1, PIK3CA and PIK3R1; activates the PI3K/AKT signaling cascade. Directly interacts (via DUF1669) with casein kinase isoforms CSNK1A1, CSNK1A1L, CSNK1D and CSNK1E. Post-translationally, phosphorylated in vitro by CSNK1A1.

It localises to the cytoplasm. The protein resides in the membrane. In terms of biological role, probable proto-oncogene that functions in the epidermal growth factor receptor/EGFR signaling pathway. Activates both the EGFR itself and downstream RAS/MAPK and PI3K/AKT/TOR signaling cascades. In Homo sapiens (Human), this protein is Protein FAM83B.